The sequence spans 580 residues: Trafficking protein particle complex subunit 14 (580 aa).

2 disordered regions span residues 90-138 (GMPG…ATTL) and 480-533 (VSHP…RSGS). Residues 105–116 (PGGGDPGGGGLF) show a composition bias toward gly residues. Positions 124–137 (THGPGPATSGGATT) are enriched in low complexity. Serine 491 bears the Phosphoserine mark. Over residues 492 to 502 (RKSSPSSPAVR) the composition is skewed to low complexity. A compositionally biased stretch (polar residues) spans 512-525 (LGRSQSFSHQQPSR). Position 517 is a phosphoserine (serine 517). Threonine 541 carries the post-translational modification Phosphothreonine. At serine 546 the chain carries Phosphoserine.

As to quaternary structure, component of the multisubunit TRAPP II complex, which includes at least TRAPPC1, TRAPPC2, TRAPPC2L, TRAPPC3, TRAPPC4, TRAPPC5, TRAPPC6A/B, TRAPPC9, TRAPPC10 and TRAPPC14. TRAPPC9, TRAPPC10 and TRAPPC14 are specific subunits of the TRAPP II complex. Interacts with alpha-tubulin during mitosis. Interacts with RAB3IP (via the N-terminal region); this interaction mediates RAB3IP association with the TRAPP II complex. Interacts with TRAPPC10. Interacts with FBF1. As to expression, broadly expressed. High levels in brain, cerebellum, testis and whole blood.

Its subcellular location is the cytoplasm. The protein resides in the cytoskeleton. It localises to the spindle. It is found in the vesicle. The protein localises to the midbody. Functionally, specific subunit of the TRAPP (transport protein particle) II complex, a highly conserved vesicle tethering complex that functions in late Golgi trafficking as a membrane tether. TRAPP II complex also has GEF activity toward RAB1A. TRAPPC14 is dispensable for TRAPPII complex integrity but mediates RAB3IP preciliary vesicle trafficking to the mother centriole during ciliogenesis. Modulates YAP1 activity as transcriptional regulator. The polypeptide is Trafficking protein particle complex subunit 14 (Homo sapiens (Human)).